A 201-amino-acid chain; its full sequence is Probable GTP-binding protein EngB (201 aa).

The EngB-type G domain occupies 22 to 197 (TFPEYAFIGR…LNYIESINKE (176 aa)). GTP contacts are provided by residues 30 to 37 (GRSNVGKS), 57 to 61 (GKTML), 75 to 78 (DLPG), 142 to 145 (TKAD), and 175 to 178 (ITSS). 2 residues coordinate Mg(2+): Ser37 and Thr59.

Belongs to the TRAFAC class TrmE-Era-EngA-EngB-Septin-like GTPase superfamily. EngB GTPase family. Mg(2+) serves as cofactor.

Its function is as follows. Necessary for normal cell division and for the maintenance of normal septation. This is Probable GTP-binding protein EngB from Bacteroides fragilis (strain ATCC 25285 / DSM 2151 / CCUG 4856 / JCM 11019 / LMG 10263 / NCTC 9343 / Onslow / VPI 2553 / EN-2).